Consider the following 356-residue polypeptide: GDSL esterase/lipase At5g37690 (356 aa).

An N-terminal signal peptide occupies residues 1–18 (MMILRLALAIVISTYATA). Serine 34 functions as the Nucleophile in the catalytic mechanism. N-linked (GlcNAc...) asparagine glycosylation is found at asparagine 116 and asparagine 291. Active-site residues include aspartate 322 and histidine 325.

It belongs to the 'GDSL' lipolytic enzyme family.

Its subcellular location is the secreted. In Arabidopsis thaliana (Mouse-ear cress), this protein is GDSL esterase/lipase At5g37690.